Reading from the N-terminus, the 175-residue chain is Adenine phosphoribosyltransferase (175 aa).

Belongs to the purine/pyrimidine phosphoribosyltransferase family. In terms of assembly, homodimer.

Its subcellular location is the cytoplasm. The enzyme catalyses AMP + diphosphate = 5-phospho-alpha-D-ribose 1-diphosphate + adenine. It participates in purine metabolism; AMP biosynthesis via salvage pathway; AMP from adenine: step 1/1. In terms of biological role, catalyzes a salvage reaction resulting in the formation of AMP, that is energically less costly than de novo synthesis. The protein is Adenine phosphoribosyltransferase of Caldicellulosiruptor bescii (strain ATCC BAA-1888 / DSM 6725 / KCTC 15123 / Z-1320) (Anaerocellum thermophilum).